A 304-amino-acid chain; its full sequence is MNNGIKEQIRELLKQHNAVLLAHNYMRDEVQEIADITGDSLALSIEAAKTEADVIVFCGVHFMAESAAILSPDKKVLLPRLDAGCPMADMVDARGLEELKKKHPGVPVVTYVNSTAEVKAHSDICCTSANATRVVKSLPDKKVIFAPDRNLGSFVAKSVPDKEFIFWDGYCPTHERMTVEAVLAKKTEYPEALFICHPECAPAVTALADQACSTSAMYDYCRDSKARQFIIGTEAGILYRLRLENPDKEFILASPALFCPNMKLTSQEDVLHSLKTLTPVVSVPEDIRLKAKLALDRMLAVPRD.

Residues H23 and S40 each contribute to the iminosuccinate site. C85 provides a ligand contact to [4Fe-4S] cluster. Iminosuccinate-binding positions include 111–113 and S128; that span reads YVN. C171 is a [4Fe-4S] cluster binding site. Iminosuccinate-binding positions include 197–199 and T214; that span reads HPE. A [4Fe-4S] cluster-binding site is contributed by C259.

It belongs to the quinolinate synthase family. Type 2 subfamily. It depends on [4Fe-4S] cluster as a cofactor.

The protein resides in the cytoplasm. The catalysed reaction is iminosuccinate + dihydroxyacetone phosphate = quinolinate + phosphate + 2 H2O + H(+). Its pathway is cofactor biosynthesis; NAD(+) biosynthesis; quinolinate from iminoaspartate: step 1/1. In terms of biological role, catalyzes the condensation of iminoaspartate with dihydroxyacetone phosphate to form quinolinate. This is Quinolinate synthase from Pelobacter propionicus (strain DSM 2379 / NBRC 103807 / OttBd1).